The chain runs to 38 residues: Large ribosomal subunit protein bL36 (38 aa).

Belongs to the bacterial ribosomal protein bL36 family.

This chain is Large ribosomal subunit protein bL36, found in Cupriavidus metallidurans (strain ATCC 43123 / DSM 2839 / NBRC 102507 / CH34) (Ralstonia metallidurans).